Reading from the N-terminus, the 1217-residue chain is Rho family-interacting cell polarization regulator 1 (1217 aa).

Ser-22 is modified (phosphoserine). Residues 83-112 (RGLTAYLEVHQQEQEKLQRQIKESKRNSRL) adopt a coiled-coil conformation. 2 positions are modified to phosphoserine: Ser-345 and Ser-347. Position 351 is a phosphothreonine (Thr-351). The segment at 371–413 (NGTAWSLSSESSDDSSSPQLSGTARYSSTPKPLVQQPEPLPVQ) is disordered. 2 stretches are compositionally biased toward low complexity: residues 376 to 391 (SLSS…PQLS) and 400 to 413 (PKPL…LPVQ). 2 positions are modified to phosphoserine: Ser-452 and Ser-455. A disordered region spans residues 565–762 (TSTTVGSTHK…SPSSIVPEPQ (198 aa)). Positions 579–594 (PLTSTGSIPSVTDSIQ) are enriched in polar residues. Residues 595-649 (TTTSPTHTTPSPTHTTVSPTHSTPSPTHTTVSPSNAALSPSNATPSLSHSTTSPT) show a composition bias toward low complexity. The span at 650 to 661 (QKATMSTHTTSA) shows a compositional bias: polar residues. Positions 664 to 695 (PVQTTTSPISTTVSPSPSVDTAIISSSSAVPS) are enriched in low complexity. Residues 720–729 (ACTSSPSLAS) are compositionally biased toward polar residues. Ser-742 bears the Phosphoserine mark. Positions 786-828 (RRLEEALRTLMAALDDYRGQFPELQGLEQEVTRLESLLMQRQG) form a coiled coil. The tract at residues 850–874 (FLNDDEDEDNDSPGDRPTSSPEVVA) is disordered. A compositionally biased stretch (acidic residues) spans 852 to 861 (NDDEDEDNDS). Phosphoserine occurs at positions 868 and 869.

The protein belongs to the RIPOR family. Interacts (via N-terminus) with RHOA (GTP-bound form); this interaction links active RHOA to STK24 and STK26 kinases. Interacts with RHOB. Interacts with RHOC. Interacts (via C-terminus) with PDCD10; this interaction occurs in a Rho-independent manner. Interacts (via C-terminus) with STK24; this interaction occurs in a PDCD10-dependent and Rho-independent manner. Interacts (via C-terminus) with STK26; this interaction occurs in a PDCD10-dependent and Rho-independent manner. Interacts (via N-terminus) with 14-3-3 proteins; these interactions occur in a Rho-dependent manner.

The protein localises to the cytoplasm. The protein resides in the golgi apparatus. Downstream effector protein for Rho-type small GTPases that plays a role in cell polarity and directional migration. Acts as an adapter protein, linking active Rho proteins to STK24 and STK26 kinases, and hence positively regulates Golgi reorientation in polarized cell migration upon Rho activation. Involved in the subcellular relocation of STK26 from the Golgi to cytoplasm punctae in a Rho- and PDCD10-dependent manner upon serum stimulation. In Rattus norvegicus (Rat), this protein is Rho family-interacting cell polarization regulator 1.